A 351-amino-acid chain; its full sequence is Anthranilate phosphoribosyltransferase (351 aa).

5-phospho-alpha-D-ribose 1-diphosphate contacts are provided by residues Gly-80, 83–84 (GD), Thr-88, 90–93 (NVST), 108–116 (KHGNRSVTS), and Ser-120. Residue Gly-80 participates in anthranilate binding. Ser-92 contributes to the Mg(2+) binding site. Anthranilate is bound at residue Asn-111. Arg-166 serves as a coordination point for anthranilate. Residues Asp-229 and Glu-230 each coordinate Mg(2+).

Belongs to the anthranilate phosphoribosyltransferase family. In terms of assembly, homodimer. It depends on Mg(2+) as a cofactor.

The enzyme catalyses N-(5-phospho-beta-D-ribosyl)anthranilate + diphosphate = 5-phospho-alpha-D-ribose 1-diphosphate + anthranilate. It participates in amino-acid biosynthesis; L-tryptophan biosynthesis; L-tryptophan from chorismate: step 2/5. Catalyzes the transfer of the phosphoribosyl group of 5-phosphorylribose-1-pyrophosphate (PRPP) to anthranilate to yield N-(5'-phosphoribosyl)-anthranilate (PRA). This is Anthranilate phosphoribosyltransferase from Prosthecochloris aestuarii (strain DSM 271 / SK 413).